Here is a 151-residue protein sequence, read N- to C-terminus: Deazaflavin-dependent nitroreductase (151 aa).

Residues 54-56, 60-65, 76-79, 87-91, and Tyr-133 each bind coenzyme F420-(gamma-Glu)n; these read RKT, RVNPLY, AASK, and MWYLN.

Belongs to the F420H(2)-dependent quinone reductase family.

The protein localises to the cell membrane. The enzyme catalyses oxidized coenzyme F420-(gamma-L-Glu)(n) + a quinol + H(+) = reduced coenzyme F420-(gamma-L-Glu)(n) + a quinone. In terms of biological role, involved in a F420-dependent anti-oxidant mechanism that protects M.tuberculosis against oxidative stress and bactericidal agents. Catalyzes the F420H(2)-dependent two-electron reduction of quinones to dihydroquinones, thereby preventing the formation of cytotoxic semiquinones obtained by the one-electron reduction pathway. In vitro, catalyzes the reduction of both benzoquinone and naphthoquinone analogs; since menaquinone is the sole quinone electron carrier in the respiratory chain in M.tuberculosis, the physiological electron acceptor for Fqr-mediated F420H(2) oxidation is therefore likely to be the endogenous menaquinone found in the membrane fraction of M.tuberculosis. Is able to use F420 species with two and five glutamate residues in its polyglutamate tail. Cannot use NADH or NADPH instead of F420H(2) as the electron donor. Is involved in the bioreductive activation of bicyclic 4-nitroimidazole prodrugs such as PA-824 and delamanid developed for anti-tuberculosis therapy against both replicating and persistent bacteria. It converts PA-824 into three primary metabolites resulting from reduction of the imidazole ring at C-3; the major one is the corresponding des-nitroimidazole that generates lethal reactive nitrogen species, including nitric oxide (NO), which appears to be responsible for the anaerobic killing activity. Ddn uses the reduced F420 produced by FGD1 to activate PA-824. Delamanid (OPC-67683) is also reduced by Ddn to its des-nitro form. The chain is Deazaflavin-dependent nitroreductase (ddn) from Mycobacterium tuberculosis (strain CDC 1551 / Oshkosh).